The sequence spans 363 residues: S-adenosylmethionine:tRNA ribosyltransferase-isomerase (363 aa).

It belongs to the QueA family. In terms of assembly, monomer.

Its subcellular location is the cytoplasm. It catalyses the reaction 7-aminomethyl-7-carbaguanosine(34) in tRNA + S-adenosyl-L-methionine = epoxyqueuosine(34) in tRNA + adenine + L-methionine + 2 H(+). The protein operates within tRNA modification; tRNA-queuosine biosynthesis. Functionally, transfers and isomerizes the ribose moiety from AdoMet to the 7-aminomethyl group of 7-deazaguanine (preQ1-tRNA) to give epoxyqueuosine (oQ-tRNA). The protein is S-adenosylmethionine:tRNA ribosyltransferase-isomerase of Haemophilus influenzae (strain ATCC 51907 / DSM 11121 / KW20 / Rd).